A 440-amino-acid chain; its full sequence is Ribosomal protein uS12 methylthiotransferase RimO (440 aa).

An MTTase N-terminal domain is found at 5 to 115 (PTVGFVSLGC…VVNAVHEVVP (111 aa)). [4Fe-4S] cluster-binding residues include C14, C50, C79, C148, C152, and C155. A Radical SAM core domain is found at 134 to 372 (LTPRHYAYLK…MAHQQAISAA (239 aa)). A TRAM domain is found at 375 to 440 (QLKVGKELDV…DEYDLWAEVI (66 aa)).

This sequence belongs to the methylthiotransferase family. RimO subfamily. [4Fe-4S] cluster serves as cofactor.

The protein localises to the cytoplasm. The catalysed reaction is L-aspartate(89)-[ribosomal protein uS12]-hydrogen + (sulfur carrier)-SH + AH2 + 2 S-adenosyl-L-methionine = 3-methylsulfanyl-L-aspartate(89)-[ribosomal protein uS12]-hydrogen + (sulfur carrier)-H + 5'-deoxyadenosine + L-methionine + A + S-adenosyl-L-homocysteine + 2 H(+). In terms of biological role, catalyzes the methylthiolation of an aspartic acid residue of ribosomal protein uS12. The sequence is that of Ribosomal protein uS12 methylthiotransferase RimO from Stutzerimonas stutzeri (strain A1501) (Pseudomonas stutzeri).